The following is a 503-amino-acid chain: Putative ribose/galactose/methyl galactoside import ATP-binding protein (503 aa).

2 ABC transporter domains span residues Leu7–Glu244 and Val254–Leu498. Gly39 to Ser46 provides a ligand contact to ATP.

The protein belongs to the ABC transporter superfamily. Carbohydrate importer 2 (CUT2) (TC 3.A.1.2) family.

It is found in the cell membrane. It catalyses the reaction D-ribose(out) + ATP + H2O = D-ribose(in) + ADP + phosphate + H(+). It carries out the reaction D-galactose(out) + ATP + H2O = D-galactose(in) + ADP + phosphate + H(+). In terms of biological role, part of an ABC transporter complex involved in carbohydrate import. Could be involved in ribose, galactose and/or methyl galactoside import. Responsible for energy coupling to the transport system. This chain is Putative ribose/galactose/methyl galactoside import ATP-binding protein, found in Geobacillus kaustophilus (strain HTA426).